The primary structure comprises 477 residues: Probable periplasmic serine endoprotease DegP-like (477 aa).

The N-terminal stretch at 1 to 27 is a signal peptide; it reads MSIPRLKSYLTMFAAVLMLGQVLTAQA. Residues H117, D147, and S220 each act as charge relay system in the active site. Residues 218 to 220 and 275 to 279 contribute to the substrate site; these read GNS and LGVVI. PDZ domains follow at residues 264-355 and 361-466; these read LKKD…IRNG and DISV…LRQG.

It belongs to the peptidase S1C family.

It is found in the periplasm. It catalyses the reaction Acts on substrates that are at least partially unfolded. The cleavage site P1 residue is normally between a pair of hydrophobic residues, such as Val-|-Val.. Might be efficient in the degradation of transiently denatured and unfolded proteins which accumulate in the periplasm following stress conditions. The sequence is that of Probable periplasmic serine endoprotease DegP-like from Pseudomonas putida (strain GB-1).